The following is a 296-amino-acid chain: 4-hydroxy-tetrahydrodipicolinate synthase (296 aa).

A pyruvate-binding site is contributed by Thr47. Tyr135 acts as the Proton donor/acceptor in catalysis. Lys163 functions as the Schiff-base intermediate with substrate in the catalytic mechanism. Ile205 provides a ligand contact to pyruvate.

The protein belongs to the DapA family. As to quaternary structure, homotetramer; dimer of dimers.

It is found in the cytoplasm. It catalyses the reaction L-aspartate 4-semialdehyde + pyruvate = (2S,4S)-4-hydroxy-2,3,4,5-tetrahydrodipicolinate + H2O + H(+). Its pathway is amino-acid biosynthesis; L-lysine biosynthesis via DAP pathway; (S)-tetrahydrodipicolinate from L-aspartate: step 3/4. Its function is as follows. Catalyzes the condensation of (S)-aspartate-beta-semialdehyde [(S)-ASA] and pyruvate to 4-hydroxy-tetrahydrodipicolinate (HTPA). In Macrococcus caseolyticus (strain JCSC5402) (Macrococcoides caseolyticum), this protein is 4-hydroxy-tetrahydrodipicolinate synthase.